Consider the following 224-residue polypeptide: Lipoprotein-releasing system ATP-binding protein LolD (224 aa).

Positions L5–V224 constitute an ABC transporter domain. An ATP-binding site is contributed by A42–S49.

This sequence belongs to the ABC transporter superfamily. Lipoprotein translocase (TC 3.A.1.125) family. As to quaternary structure, the complex is composed of two ATP-binding proteins (LolD) and two transmembrane proteins (LolC and LolE).

It is found in the cell inner membrane. In terms of biological role, part of the ABC transporter complex LolCDE involved in the translocation of mature outer membrane-directed lipoproteins, from the inner membrane to the periplasmic chaperone, LolA. Responsible for the formation of the LolA-lipoprotein complex in an ATP-dependent manner. The sequence is that of Lipoprotein-releasing system ATP-binding protein LolD from Cereibacter sphaeroides (strain ATCC 17023 / DSM 158 / JCM 6121 / CCUG 31486 / LMG 2827 / NBRC 12203 / NCIMB 8253 / ATH 2.4.1.) (Rhodobacter sphaeroides).